The chain runs to 629 residues: MHFHERFDVIVVGGGHAGTEAALAAARMGSKTLLLTHNLDTLGQMSCNPAIGGIGKGHLVKEIDALGGAMAIATDYAGIQFRTLNSSKGPAVRATRAQADRALYRQKIQNILQNQPNLRIFQQAVDDLVVENDRVVGVITQMGLAFEAPAVVLTAGTFLSGKIHIGLENYSGGRAGDPPSIALAHRLRELPIRVGRLKTGTPPRIDANTIDFTQMTEQKGDTPLPVMSFMGDVSHHPKQISCWITHTNEKTHDIIRGGLDRSPMYSGVIEGIGPRYCPSIEDKIHRFSDKSSHQIFIEPEGLNTNEIYPNGISTSLPFDVQLNLVRSIQGMENAEIVRPGYAIEYDYFDPRDLKNSLETKTINGLFFAGQINGTTGYEEAGAQGLLAGMNAALQVQGKEAWCPRRDEAYIGVLVDDLSTLGTKEPYRMFTSRAEYRLLLREDNADLRLTAKGRELGLVDDARWASFSEKLESIELELQRLRSQWIHPNSPLVPVLNPHLNTPISREASFEELLRRPEMDYSKLMQIEGFGPGLADPLAAEQVQIQVKYSGYIQRQQEEINKAVRNENTGLPLNLDYKEVPGLSNEVIAKLNSHKPETIGQASRISGITPAAISILLVHLKKRGLLRKSA.

Residues 13-18 (GGGHAG), Val-125, and Ser-180 contribute to the FAD site. 273–287 (GPRYCPSIEDKIHRF) is a binding site for NAD(+). Position 370 (Gln-370) interacts with FAD.

This sequence belongs to the MnmG family. As to quaternary structure, homodimer. Heterotetramer of two MnmE and two MnmG subunits. Requires FAD as cofactor.

The protein resides in the cytoplasm. In terms of biological role, NAD-binding protein involved in the addition of a carboxymethylaminomethyl (cmnm) group at the wobble position (U34) of certain tRNAs, forming tRNA-cmnm(5)s(2)U34. The chain is tRNA uridine 5-carboxymethylaminomethyl modification enzyme MnmG from Shewanella sp. (strain MR-7).